A 274-amino-acid chain; its full sequence is Nitrogenase iron protein (274 aa).

8-15 provides a ligand contact to ATP; that stretch reads GKGGIGKS. [4Fe-4S] cluster is bound at residue C94. R97 is modified (ADP-ribosylarginine; by dinitrogenase reductase ADP-ribosyltransferase). Residue C131 coordinates [4Fe-4S] cluster.

The protein belongs to the NifH/BchL/ChlL family. In terms of assembly, homodimer. It depends on [4Fe-4S] cluster as a cofactor. In terms of processing, the reversible ADP-ribosylation of Arg-97 inactivates the nitrogenase reductase and regulates nitrogenase activity.

The enzyme catalyses N2 + 8 reduced [2Fe-2S]-[ferredoxin] + 16 ATP + 16 H2O = H2 + 8 oxidized [2Fe-2S]-[ferredoxin] + 2 NH4(+) + 16 ADP + 16 phosphate + 6 H(+). Its function is as follows. The key enzymatic reactions in nitrogen fixation are catalyzed by the nitrogenase complex, which has 2 components: the iron protein and the molybdenum-iron protein. The protein is Nitrogenase iron protein of Chlorobium phaeobacteroides (strain DSM 266 / SMG 266 / 2430).